A 49-amino-acid polypeptide reads, in one-letter code: Delta-actitoxin-Axm1b (49 aa).

Residues 1-7 (GVPCLCD) are well-structured region. Cystine bridges form between Cys4–Cys46, Cys6–Cys36, and Cys29–Cys47. The tract at residues 8–17 (SDGPRPRGNT) is arg-14 loop (non-well-structured region). The segment at 18–49 (LSGILWFYPSGCPSGWHNCKAHGPNIGWCCKK) is well-structured region.

It belongs to the sea anemone sodium channel inhibitory toxin family. Type I subfamily.

The protein resides in the secreted. Its subcellular location is the nematocyst. Functionally, binds specifically to voltage-gated sodium channels (Nav) (site 3), thereby delaying their inactivation. This toxin has the highest affinity of all anemone toxins for the mammalian sodium channel, whereas its paralog Anthopleurin-A retains the greatest capacity to discriminate between cardiac (Nav1.5/SCN5A) and neuronal sodium channels. When tested electrophysiologically, this toxin exhibits a high affinity for multiple sodium channels with a 50-fold preference for rat cardiac (Nav1.5/SCN5A) over neuronal channels (0.1 nM versus 5 nM). When tested by ion flux, the affinities are similar and appear to have higher affinity (9 nM versus 22 nM). The residue Lys-37 of this toxin has been shown to interact with channel Nav1.5 (residue Asp-1612 in rat and Asp-1610 in human), which is located in the DIV S3-S4 linker (corresponding to channel site 3). Selectively modifies sodium channel inactivation from the open state with little effect on channel activation or on inactivation from closed states. Does not display phospholipid-binding activities, suggesting that the domain IV S3-S4 linker is located at the extracellular surface and not buried in the phospholipid bilayer. This Anthopleura xanthogrammica (Giant green sea anemone) protein is Delta-actitoxin-Axm1b.